Here is a 338-residue protein sequence, read N- to C-terminus: Lumican (338 aa).

A signal peptide spans 1–18 (MSLSAFTLFLALIGGTSG). Residue Gln-19 is modified to Pyrrolidone carboxylic acid. Tyr-20, Tyr-21, Tyr-23, and Tyr-30 each carry sulfotyrosine. Residues 28 to 66 (SIYGQSSPNCAPECNCPESYPSAMYCDELKLKSVPMVPP) enclose the LRRNT domain. 10 LRR repeats span residues 67-88 (GIKY…AFEN), 91-114 (DLQW…VFSK), 117-137 (QLKK…PLPK), 138-159 (SLED…EGLV), 160-181 (NLTF…AAFK), 185-205 (SLEY…GLPV), 206-227 (SLLT…YFKR), 230-253 (ALQY…SFNV), 255-276 (SLVE…NENL), and 277-296 (ENYY…SFCK). A glycan (N-linked (GlcNAc...) (keratan sulfate) asparagine) is linked at Asn-88. Asn-127 is a glycosylation site (N-linked (GlcNAc...) (keratan sulfate) asparagine). The N-linked (GlcNAc...) (keratan sulfate) asparagine glycan is linked to Asn-160. The N-linked (GlcNAc...) (keratan sulfate) asparagine glycan is linked to Asn-252. Cys-295 and Cys-328 form a disulfide bridge. A Phosphoserine modification is found at Ser-304. The stretch at 305-326 (KIKHLRLDGNRISETSLPPDMY) is one LRR 11 repeat.

The protein belongs to the small leucine-rich proteoglycan (SLRP) family. SLRP class II subfamily. In terms of assembly, binds to laminin. Post-translationally, sulfated on tyrosine residue(s). In terms of processing, contains keratan sulfate. In terms of tissue distribution, cornea and other tissues.

It is found in the secreted. It localises to the extracellular space. The protein resides in the extracellular matrix. This chain is Lumican (LUM), found in Homo sapiens (Human).